Consider the following 325-residue polypeptide: Tetraacyldisaccharide 4'-kinase (325 aa).

55–62 lines the ATP pocket; that stretch reads TAGGNGKT.

The protein belongs to the LpxK family.

The enzyme catalyses a lipid A disaccharide + ATP = a lipid IVA + ADP + H(+). It participates in glycolipid biosynthesis; lipid IV(A) biosynthesis; lipid IV(A) from (3R)-3-hydroxytetradecanoyl-[acyl-carrier-protein] and UDP-N-acetyl-alpha-D-glucosamine: step 6/6. Transfers the gamma-phosphate of ATP to the 4'-position of a tetraacyldisaccharide 1-phosphate intermediate (termed DS-1-P) to form tetraacyldisaccharide 1,4'-bis-phosphate (lipid IVA). This chain is Tetraacyldisaccharide 4'-kinase, found in Salmonella arizonae (strain ATCC BAA-731 / CDC346-86 / RSK2980).